Consider the following 208-residue polypeptide: Potassium-transporting ATPase KdpC subunit (208 aa).

The helical transmembrane segment at 6 to 26 threads the bilayer; the sequence is PALLVSIVLLVVCGLVYPLVL.

This sequence belongs to the KdpC family. In terms of assembly, the system is composed of three essential subunits: KdpA, KdpB and KdpC.

The protein localises to the cell membrane. Functionally, part of the high-affinity ATP-driven potassium transport (or Kdp) system, which catalyzes the hydrolysis of ATP coupled with the electrogenic transport of potassium into the cytoplasm. This subunit acts as a catalytic chaperone that increases the ATP-binding affinity of the ATP-hydrolyzing subunit KdpB by the formation of a transient KdpB/KdpC/ATP ternary complex. The chain is Potassium-transporting ATPase KdpC subunit from Clostridioides difficile (strain 630) (Peptoclostridium difficile).